The following is a 344-amino-acid chain: Ketol-acid reductoisomerase (NADP(+)) (344 aa).

In terms of domain architecture, KARI N-terminal Rossmann spans 2 to 181; that stretch reads EKIYYDADIS…GAGRAGILTT (180 aa). Residues 25–28, Arg-48, Ser-52, and 82–85 contribute to the NADP(+) site; these read YGSQ and DERQ. Residue His-107 is part of the active site. Residue Gly-133 participates in NADP(+) binding. The 146-residue stretch at 182–327 folds into the KARI C-terminal knotted domain; that stretch reads TFREETETDL…RKLRSMMPFI (146 aa). Mg(2+) contacts are provided by Asp-190, Glu-194, Glu-226, and Glu-230. A substrate-binding site is contributed by Ser-251.

It belongs to the ketol-acid reductoisomerase family. It depends on Mg(2+) as a cofactor.

It carries out the reaction (2R)-2,3-dihydroxy-3-methylbutanoate + NADP(+) = (2S)-2-acetolactate + NADPH + H(+). It catalyses the reaction (2R,3R)-2,3-dihydroxy-3-methylpentanoate + NADP(+) = (S)-2-ethyl-2-hydroxy-3-oxobutanoate + NADPH + H(+). It functions in the pathway amino-acid biosynthesis; L-isoleucine biosynthesis; L-isoleucine from 2-oxobutanoate: step 2/4. It participates in amino-acid biosynthesis; L-valine biosynthesis; L-valine from pyruvate: step 2/4. Its function is as follows. Involved in the biosynthesis of branched-chain amino acids (BCAA). Catalyzes an alkyl-migration followed by a ketol-acid reduction of (S)-2-acetolactate (S2AL) to yield (R)-2,3-dihydroxy-isovalerate. In the isomerase reaction, S2AL is rearranged via a Mg-dependent methyl migration to produce 3-hydroxy-3-methyl-2-ketobutyrate (HMKB). In the reductase reaction, this 2-ketoacid undergoes a metal-dependent reduction by NADPH to yield (R)-2,3-dihydroxy-isovalerate. This is Ketol-acid reductoisomerase (NADP(+)) from Alicyclobacillus acidocaldarius subsp. acidocaldarius (strain ATCC 27009 / DSM 446 / BCRC 14685 / JCM 5260 / KCTC 1825 / NBRC 15652 / NCIMB 11725 / NRRL B-14509 / 104-IA) (Bacillus acidocaldarius).